The following is a 302-amino-acid chain: Probable alpha-L-glutamate ligase (302 aa).

Residues 104–287 enclose the ATP-grasp domain; the sequence is MQLLSREGVG…VAGMIIEFIE (184 aa). Residues Lys-141, 178-179, Asp-187, and 211-213 contribute to the ATP site; these read EF and RSN. Asp-248, Glu-260, and Asn-262 together coordinate Mg(2+). Residues Asp-248, Glu-260, and Asn-262 each coordinate Mn(2+).

This sequence belongs to the RimK family. Requires Mg(2+) as cofactor. The cofactor is Mn(2+).

This chain is Probable alpha-L-glutamate ligase, found in Halorhodospira halophila (strain DSM 244 / SL1) (Ectothiorhodospira halophila (strain DSM 244 / SL1)).